Consider the following 99-residue polypeptide: NADH-quinone oxidoreductase subunit K (99 aa).

3 helical membrane-spanning segments follow: residues 3–23, 28–48, and 59–79; these read PDNY…GVLL, IVMF…FVTF, and VVAF…LAII.

This sequence belongs to the complex I subunit 4L family. NDH-1 is composed of 14 different subunits. Subunits NuoA, H, J, K, L, M, N constitute the membrane sector of the complex.

Its subcellular location is the cell membrane. The enzyme catalyses a quinone + NADH + 5 H(+)(in) = a quinol + NAD(+) + 4 H(+)(out). Functionally, NDH-1 shuttles electrons from NADH, via FMN and iron-sulfur (Fe-S) centers, to quinones in the respiratory chain. The immediate electron acceptor for the enzyme in this species is believed to be a menaquinone. Couples the redox reaction to proton translocation (for every two electrons transferred, four hydrogen ions are translocated across the cytoplasmic membrane), and thus conserves the redox energy in a proton gradient. This Mycolicibacterium vanbaalenii (strain DSM 7251 / JCM 13017 / BCRC 16820 / KCTC 9966 / NRRL B-24157 / PYR-1) (Mycobacterium vanbaalenii) protein is NADH-quinone oxidoreductase subunit K.